Consider the following 545-residue polypeptide: Ribulokinase (545 aa).

The protein belongs to the ribulokinase family.

The catalysed reaction is D-ribulose + ATP = D-ribulose 5-phosphate + ADP + H(+). It catalyses the reaction L-ribulose + ATP = L-ribulose 5-phosphate + ADP + H(+). It functions in the pathway carbohydrate degradation; L-arabinose degradation via L-ribulose; D-xylulose 5-phosphate from L-arabinose (bacterial route): step 2/3. In Staphylococcus aureus (strain MRSA252), this protein is Ribulokinase.